A 338-amino-acid chain; its full sequence is Ketol-acid reductoisomerase (NADP(+)) (338 aa).

One can recognise a KARI N-terminal Rossmann domain in the interval 1 to 181 (MKVFYDKDCD…GGGRTGIIET (181 aa)). Residues 24 to 27 (YGSQ), Arg47, Ser50, Thr52, and 82 to 85 (DEFQ) contribute to the NADP(+) site. His107 is an active-site residue. Gly133 contacts NADP(+). A KARI C-terminal knotted domain is found at 182–327 (TFKDETETDL…EQLRSMMPWI (146 aa)). Mg(2+)-binding residues include Asp190, Glu194, Glu226, and Glu230. Ser251 lines the substrate pocket.

It belongs to the ketol-acid reductoisomerase family. Mg(2+) serves as cofactor.

The catalysed reaction is (2R)-2,3-dihydroxy-3-methylbutanoate + NADP(+) = (2S)-2-acetolactate + NADPH + H(+). It catalyses the reaction (2R,3R)-2,3-dihydroxy-3-methylpentanoate + NADP(+) = (S)-2-ethyl-2-hydroxy-3-oxobutanoate + NADPH + H(+). It participates in amino-acid biosynthesis; L-isoleucine biosynthesis; L-isoleucine from 2-oxobutanoate: step 2/4. The protein operates within amino-acid biosynthesis; L-valine biosynthesis; L-valine from pyruvate: step 2/4. In terms of biological role, involved in the biosynthesis of branched-chain amino acids (BCAA). Catalyzes an alkyl-migration followed by a ketol-acid reduction of (S)-2-acetolactate (S2AL) to yield (R)-2,3-dihydroxy-isovalerate. In the isomerase reaction, S2AL is rearranged via a Mg-dependent methyl migration to produce 3-hydroxy-3-methyl-2-ketobutyrate (HMKB). In the reductase reaction, this 2-ketoacid undergoes a metal-dependent reduction by NADPH to yield (R)-2,3-dihydroxy-isovalerate. The polypeptide is Ketol-acid reductoisomerase (NADP(+)) (Pseudomonas putida (strain W619)).